The sequence spans 231 residues: MDNRGEFLNNVAQALGRPLRLEPQAEDAPLNNYANERLTQLNQQQRCDAFIQFASDVMLTRCELTSEAKAAEAAIRLCKELGDQSVVISGDTRLEELGISERLQQECNAVVWDPAKGAENISQAEQAKVGVVYAEYGLTESGGVVLFSAAERGRSLSLLPEYSLFILRKSTILPRVAQLAEKLHQKAQAGERMPSCINIISGPSSTADIELIKVVGVHGPVKAVYLIIEDC.

The protein belongs to the LutC/YkgG family.

This is an uncharacterized protein from Escherichia coli (strain K12).